The chain runs to 428 residues: Succinyl-CoA--L-malate CoA-transferase alpha subunit (428 aa).

Residues 1-31 (MPPTGEEPSGHAESKPPASDPMSTPGTGQEQ) form a disordered region. A compositionally biased stretch (polar residues) spans 21-31 (PMSTPGTGQEQ). Catalysis depends on Asp200, which acts as the Nucleophile.

The protein belongs to the CoA-transferase III family. Forms a large complex composed of six heterodimers (alpha, beta).

It carries out the reaction succinyl-CoA + (S)-malate = (S)-malyl-CoA + succinate. The enzyme catalyses (3S)-citramalate + succinyl-CoA = (3S)-citramalyl-CoA + succinate. Functionally, involved in the 3-hydroxypropionate cycle used for autotrophic carbon dioxide fixation. Catalyzes the transfer of CoA moiety from succinyl-CoA to L-malate to yield L-malyl-CoA. It is highly specific for succinyl-CoA as the CoA donor, however it can accept L-citramalate instead of L-malate as the CoA acceptor. In Chloroflexus aurantiacus, this protein is Succinyl-CoA--L-malate CoA-transferase alpha subunit (smtA).